A 566-amino-acid chain; its full sequence is Liver carboxylesterase 1 (566 aa).

The first 18 residues, 1–18 (MWLRALVLATLAAFTAWG), serve as a signal peptide directing secretion. Asn-79 carries an N-linked (GlcNAc...) asparagine glycan. Cys-87 and Cys-116 are disulfide-bonded. The active-site Acyl-ester intermediate is Ser-221. An intrachain disulfide couples Cys-274 to Cys-285. Glu-354 acts as the Charge relay system in catalysis. The residue at position 379 (Ser-379) is a Phosphoserine. The Charge relay system role is filled by His-467.

It belongs to the type-B carboxylesterase/lipase family. As to quaternary structure, homotrimer and homohexamer. Binds to beta-glucuronidase.

Its subcellular location is the endoplasmic reticulum lumen. The protein localises to the cytoplasm. It is found in the lipid droplet. It catalyses the reaction a carboxylic ester + H2O = an alcohol + a carboxylate + H(+). The catalysed reaction is cholesteryl (9Z-octadecenoate) + H2O = cholesterol + (9Z)-octadecenoate + H(+). It carries out the reaction 2-(5Z,8Z,11Z,14Z-eicosatetraenoyl)-glycerol + H2O = glycerol + (5Z,8Z,11Z,14Z)-eicosatetraenoate + H(+). The enzyme catalyses prostaglandin E2 1-glyceryl ester + H2O = prostaglandin E2 + glycerol + H(+). It catalyses the reaction a cholesterol ester + H2O = cholesterol + a fatty acid + H(+). The catalysed reaction is prostaglandin F2alpha 1-glyceryl ester + H2O = prostaglandin F2alpha + glycerol + H(+). Functionally, involved in the detoxification of xenobiotics and in the activation of ester and amide prodrugs. Hydrolyzes aromatic and aliphatic esters, but has no catalytic activity toward amides or a fatty acyl-CoA ester. Displays fatty acid ethyl ester synthase activity, catalyzing the ethyl esterification of oleic acid to ethyloleate. Converts monoacylglycerides to free fatty acids and glycerol. Hydrolyzes of 2-arachidonoylglycerol and prostaglandins. Hydrolyzes cellular cholesteryl esters to free cholesterols and promotes reverse cholesterol transport (RCT) by facilitating both the initial and final steps in the process. First of all, allows free cholesterol efflux from macrophages to extracellular cholesterol acceptors and secondly, releases free cholesterol from lipoprotein-delivered cholesteryl esters in the liver for bile acid synthesis or direct secretion into the bile. This Macaca fascicularis (Crab-eating macaque) protein is Liver carboxylesterase 1.